The chain runs to 311 residues: Olfactory receptor 1N1 (311 aa).

The Extracellular portion of the chain corresponds to 1-23 (MENQSSISEFFLRGISAPPEQQQ). Asn-3 is a glycosylation site (N-linked (GlcNAc...) asparagine). The helical transmembrane segment at 24 to 47 (SLFGIFLCMYLVTLTGNLLIILAI) threads the bilayer. At 48-55 (GSDLHLHT) the chain is on the cytoplasmic side. Residues 56 to 77 (PMYFFLANLSFVDMGLTSSTVT) form a helical membrane-spanning segment. The Extracellular portion of the chain corresponds to 78–98 (KMLVNIQTRHHTISYTGCLTQ). Residues Cys-95 and Cys-187 are joined by a disulfide bond. The chain crosses the membrane as a helical span at residues 99 to 118 (MYFFLMFGDLDSFFLAAMAY). Over 119 to 137 (DRYVAICHPLCYSTVMRPQ) the chain is Cytoplasmic. Residues 138–156 (VCALMLALCWVLTNIVALT) form a helical membrane-spanning segment. The Extracellular portion of the chain corresponds to 157–194 (HTFLMARLSFCVTGEIAHFFCDITPVLKLSCSDTHINE). A helical transmembrane segment spans residues 195–217 (MMVFVLGGTVLIVPFLCIVTSYI). The Cytoplasmic portion of the chain corresponds to 218-234 (HIVPAILRVRTRGGVGK). A helical membrane pass occupies residues 235 to 257 (AFSTCSSHLCVVCVFYGTLFSAY). The Extracellular portion of the chain corresponds to 258–270 (LCPPSIASEEKDI). A helical membrane pass occupies residues 271 to 290 (AAAAMYTIVTPMLNPFIYSL). The Cytoplasmic portion of the chain corresponds to 291–311 (RNKDMKGALKRLFSHRSIVSS).

This sequence belongs to the G-protein coupled receptor 1 family.

It is found in the cell membrane. Functionally, odorant receptor. The sequence is that of Olfactory receptor 1N1 (OR1N1) from Homo sapiens (Human).